Reading from the N-terminus, the 309-residue chain is Ribonuclease Z (309 aa).

Residues His63, His65, Asp67, His68, His145, Asp216, and His274 each contribute to the Zn(2+) site. Residue Asp67 is the Proton acceptor of the active site.

This sequence belongs to the RNase Z family. In terms of assembly, homodimer. The cofactor is Zn(2+).

The catalysed reaction is Endonucleolytic cleavage of RNA, removing extra 3' nucleotides from tRNA precursor, generating 3' termini of tRNAs. A 3'-hydroxy group is left at the tRNA terminus and a 5'-phosphoryl group is left at the trailer molecule.. Zinc phosphodiesterase, which displays some tRNA 3'-processing endonuclease activity. Probably involved in tRNA maturation, by removing a 3'-trailer from precursor tRNA. This is Ribonuclease Z from Streptococcus pneumoniae serotype 19F (strain G54).